The sequence spans 170 residues: Protein-export protein SecB (170 aa).

Belongs to the SecB family. In terms of assembly, homotetramer, a dimer of dimers. One homotetramer interacts with 1 SecA dimer.

The protein resides in the cytoplasm. Functionally, one of the proteins required for the normal export of preproteins out of the cell cytoplasm. It is a molecular chaperone that binds to a subset of precursor proteins, maintaining them in a translocation-competent state. It also specifically binds to its receptor SecA. The protein is Protein-export protein SecB of Xanthomonas campestris pv. campestris (strain 8004).